A 276-amino-acid chain; its full sequence is CTD small phosphatase-like protein (276 aa).

The disordered stretch occupies residues Met-1–Asn-31. In terms of domain architecture, FCP1 homology spans Leu-102–Leu-260. Asp-112 functions as the 4-aspartylphosphate intermediate in the catalytic mechanism. 3 residues coordinate Mg(2+): Asp-112, Asp-114, and Asn-223. The active-site Proton donor is the Asp-114.

In terms of assembly, monomer. Interacts with REST. Mg(2+) serves as cofactor.

The protein localises to the nucleus. It catalyses the reaction O-phospho-L-seryl-[protein] + H2O = L-seryl-[protein] + phosphate. It carries out the reaction O-phospho-L-threonyl-[protein] + H2O = L-threonyl-[protein] + phosphate. In terms of biological role, preferentially catalyzes the dephosphorylation of 'Ser-5' within the tandem 7 residue repeats in the C-terminal domain (CTD) of the largest RNA polymerase II subunit POLR2A. Negatively regulates RNA polymerase II transcription, possibly by controlling the transition from initiation/capping to processive transcript elongation. Recruited by REST to neuronal genes that contain RE-1 elements, leading to neuronal gene silencing in non-neuronal cells. This Mus musculus (Mouse) protein is CTD small phosphatase-like protein (Ctdspl).